A 203-amino-acid polypeptide reads, in one-letter code: Protein-methionine-sulfoxide reductase heme-binding subunit MsrQ (203 aa).

Transmembrane regions (helical) follow at residues 10-30 (IFVLGCLFPLWWFYEAAMGLL), 37-57 (IMMDRLGLGALVFLLITLSMT), 75-95 (LGLWCFAYIVLHLVSYLVFIL), 110-130 (PYIIVGALGFLGLLALAVTSN), 147-167 (LVYVILGLGLLHFLWIVRSDL), and 169-189 (EWAIYAGIGGVLLVMRIPPVW).

This sequence belongs to the MsrQ family. Heterodimer of a catalytic subunit (MsrP) and a heme-binding subunit (MsrQ). It depends on FMN as a cofactor. Requires heme b as cofactor.

Its subcellular location is the cell inner membrane. In terms of biological role, part of the MsrPQ system that repairs oxidized periplasmic proteins containing methionine sulfoxide residues (Met-O), using respiratory chain electrons. Thus protects these proteins from oxidative-stress damage caused by reactive species of oxygen and chlorine generated by the host defense mechanisms. MsrPQ is essential for the maintenance of envelope integrity under bleach stress, rescuing a wide series of structurally unrelated periplasmic proteins from methionine oxidation. MsrQ provides electrons for reduction to the reductase catalytic subunit MsrP, using the quinone pool of the respiratory chain. This is Protein-methionine-sulfoxide reductase heme-binding subunit MsrQ from Pseudomonas entomophila (strain L48).